A 340-amino-acid chain; its full sequence is MSRYKLFIVDDSALIRLRLKTSLALWPEIQIVGEAENGQEALKKIPLVKPDVVTLDLEMPVLDGLSTLKELNKVYPVPVIMLSSLTTHGAKATIEALENGAVDFVPKDGDWNKVVSELKEKIKIAVLAKKRPKPFTGGTLNPKNVILGKNGRQLVVIGASTGGPPALREIIPKLPQTFPVPIVIIQHITRGFSKPLADQLARVSRLKVKEAEKDEQLLPGTVYVAPAGYTFKIDKQGGSLTAKIIEPVEYLPAHFYPSVDEAMLSAAEVTGSKTIGVLLTGMGKDGALGMKAIKERGGYTIAQDEETSVVYGMPKAAIDIGGVSRVLPLSAIAEEIAANI.

The region spanning 5-122 (KLFIVDDSAL…KVVSELKEKI (118 aa)) is the Response regulatory domain. 4-aspartylphosphate is present on Asp56. Residues 148–340 (GKNGRQLVVI…AIAEEIAANI (193 aa)) form the CheB-type methylesterase domain. Residues Ser160, His187, and Asp285 contribute to the active site.

The protein belongs to the CheB family. Post-translationally, phosphorylated by CheA. Phosphorylation of the N-terminal regulatory domain activates the methylesterase activity.

Its subcellular location is the cytoplasm. It carries out the reaction [protein]-L-glutamate 5-O-methyl ester + H2O = L-glutamyl-[protein] + methanol + H(+). It catalyses the reaction L-glutaminyl-[protein] + H2O = L-glutamyl-[protein] + NH4(+). Its function is as follows. Involved in chemotaxis. Part of a chemotaxis signal transduction system that modulates chemotaxis in response to various stimuli. Catalyzes the demethylation of specific methylglutamate residues introduced into the chemoreceptors (methyl-accepting chemotaxis proteins or MCP) by CheR. Also mediates the irreversible deamidation of specific glutamine residues to glutamic acid. The protein is Protein-glutamate methylesterase/protein-glutamine glutaminase 1 of Carboxydothermus hydrogenoformans (strain ATCC BAA-161 / DSM 6008 / Z-2901).